We begin with the raw amino-acid sequence, 278 residues long: 4-deoxy-L-threo-5-hexosulose-uronate ketol-isomerase (278 aa).

Zn(2+)-binding residues include histidine 196, histidine 198, glutamate 203, and histidine 245.

It belongs to the KduI family. Requires Zn(2+) as cofactor.

It carries out the reaction 5-dehydro-4-deoxy-D-glucuronate = 3-deoxy-D-glycero-2,5-hexodiulosonate. The protein operates within glycan metabolism; pectin degradation; 2-dehydro-3-deoxy-D-gluconate from pectin: step 4/5. Functionally, catalyzes the isomerization of 5-dehydro-4-deoxy-D-glucuronate to 3-deoxy-D-glycero-2,5-hexodiulosonate. This Pectobacterium carotovorum subsp. carotovorum (Erwinia carotovora subsp. carotovora) protein is 4-deoxy-L-threo-5-hexosulose-uronate ketol-isomerase.